A 272-amino-acid polypeptide reads, in one-letter code: Formamidopyrimidine-DNA glycosylase (272 aa).

Pro-2 functions as the Schiff-base intermediate with DNA in the catalytic mechanism. Glu-3 (proton donor) is an active-site residue. Residue Lys-57 is the Proton donor; for beta-elimination activity of the active site. The DNA site is built by His-90, Arg-109, and Lys-150. The FPG-type zinc-finger motif lies at 235 to 269 (HVYGRAKKKCLLCSSIIQEEKIGQRNTFWCGHCQP). The active-site Proton donor; for delta-elimination activity is the Arg-259.

This sequence belongs to the FPG family. In terms of assembly, monomer. It depends on Zn(2+) as a cofactor.

It carries out the reaction Hydrolysis of DNA containing ring-opened 7-methylguanine residues, releasing 2,6-diamino-4-hydroxy-5-(N-methyl)formamidopyrimidine.. The enzyme catalyses 2'-deoxyribonucleotide-(2'-deoxyribose 5'-phosphate)-2'-deoxyribonucleotide-DNA = a 3'-end 2'-deoxyribonucleotide-(2,3-dehydro-2,3-deoxyribose 5'-phosphate)-DNA + a 5'-end 5'-phospho-2'-deoxyribonucleoside-DNA + H(+). Functionally, involved in base excision repair of DNA damaged by oxidation or by mutagenic agents. Acts as a DNA glycosylase that recognizes and removes damaged bases. Has a preference for oxidized purines, such as 7,8-dihydro-8-oxoguanine (8-oxoG). Has AP (apurinic/apyrimidinic) lyase activity and introduces nicks in the DNA strand. Cleaves the DNA backbone by beta-delta elimination to generate a single-strand break at the site of the removed base with both 3'- and 5'-phosphates. This is Formamidopyrimidine-DNA glycosylase from Aliivibrio fischeri (strain ATCC 700601 / ES114) (Vibrio fischeri).